A 368-amino-acid polypeptide reads, in one-letter code: DNA replication and repair protein RecF (368 aa).

Residue 30 to 37 (GRNGSGKT) coordinates ATP.

The protein belongs to the RecF family.

It localises to the cytoplasm. In terms of biological role, the RecF protein is involved in DNA metabolism; it is required for DNA replication and normal SOS inducibility. RecF binds preferentially to single-stranded, linear DNA. It also seems to bind ATP. The polypeptide is DNA replication and repair protein RecF (Chlorobaculum tepidum (strain ATCC 49652 / DSM 12025 / NBRC 103806 / TLS) (Chlorobium tepidum)).